A 149-amino-acid polypeptide reads, in one-letter code: Urease accessory protein UreE (149 aa).

This sequence belongs to the UreE family.

Its subcellular location is the cytoplasm. Involved in urease metallocenter assembly. Binds nickel. Probably functions as a nickel donor during metallocenter assembly. The protein is Urease accessory protein UreE of Ureaplasma urealyticum serovar 10 (strain ATCC 33699 / Western).